The following is a 115-amino-acid chain: NAD(P)H-quinone oxidoreductase subunit M (115 aa).

This sequence belongs to the complex I NdhM subunit family. NDH-1 can be composed of about 15 different subunits; different subcomplexes with different compositions have been identified which probably have different functions.

It localises to the cellular thylakoid membrane. It carries out the reaction a plastoquinone + NADH + (n+1) H(+)(in) = a plastoquinol + NAD(+) + n H(+)(out). The catalysed reaction is a plastoquinone + NADPH + (n+1) H(+)(in) = a plastoquinol + NADP(+) + n H(+)(out). Functionally, NDH-1 shuttles electrons from an unknown electron donor, via FMN and iron-sulfur (Fe-S) centers, to quinones in the respiratory and/or the photosynthetic chain. The immediate electron acceptor for the enzyme in this species is believed to be plastoquinone. Couples the redox reaction to proton translocation, and thus conserves the redox energy in a proton gradient. Cyanobacterial NDH-1 also plays a role in inorganic carbon-concentration. In Prochlorococcus marinus (strain MIT 9215), this protein is NAD(P)H-quinone oxidoreductase subunit M.